A 546-amino-acid polypeptide reads, in one-letter code: CTP synthase (546 aa).

The amidoligase domain stretch occupies residues 1-264 (MRYIVVTGGV…TKYIMKAMRL (264 aa)). Residue Ser12 coordinates CTP. Ser12 lines the UTP pocket. ATP is bound by residues 13–18 (GLGKGI) and Asp70. The Mg(2+) site is built by Asp70 and Glu140. CTP-binding positions include 147–149 (DIE), 185–190 (KTKPTQ), and Lys221. UTP contacts are provided by residues 185–190 (KTKPTQ) and Lys221. Positions 298–534 (GSQCTDPMKD…VEAMKAQRLR (237 aa)) constitute a Glutamine amidotransferase type-1 domain. Gly357 is an L-glutamine binding site. Cys384 (nucleophile; for glutamine hydrolysis) is an active-site residue. Residues 385 to 388 (FGMQ), Glu408, and Arg464 each bind L-glutamine. Catalysis depends on residues His507 and Glu509.

The protein belongs to the CTP synthase family. As to quaternary structure, homotetramer.

The enzyme catalyses UTP + L-glutamine + ATP + H2O = CTP + L-glutamate + ADP + phosphate + 2 H(+). The catalysed reaction is L-glutamine + H2O = L-glutamate + NH4(+). It catalyses the reaction UTP + NH4(+) + ATP = CTP + ADP + phosphate + 2 H(+). Its pathway is pyrimidine metabolism; CTP biosynthesis via de novo pathway; CTP from UDP: step 2/2. Its activity is regulated as follows. Allosterically activated by GTP, when glutamine is the substrate; GTP has no effect on the reaction when ammonia is the substrate. The allosteric effector GTP functions by stabilizing the protein conformation that binds the tetrahedral intermediate(s) formed during glutamine hydrolysis. Inhibited by the product CTP, via allosteric rather than competitive inhibition. In terms of biological role, catalyzes the ATP-dependent amination of UTP to CTP with either L-glutamine or ammonia as the source of nitrogen. Regulates intracellular CTP levels through interactions with the four ribonucleotide triphosphates. The sequence is that of CTP synthase from Methanothrix thermoacetophila (strain DSM 6194 / JCM 14653 / NBRC 101360 / PT) (Methanosaeta thermophila).